Here is a 355-residue protein sequence, read N- to C-terminus: 4-hydroxy-3-methylbut-2-en-1-yl diphosphate synthase (flavodoxin) (355 aa).

Residues C266, C269, C301, and E308 each contribute to the [4Fe-4S] cluster site.

It belongs to the IspG family. It depends on [4Fe-4S] cluster as a cofactor.

It carries out the reaction (2E)-4-hydroxy-3-methylbut-2-enyl diphosphate + oxidized [flavodoxin] + H2O + 2 H(+) = 2-C-methyl-D-erythritol 2,4-cyclic diphosphate + reduced [flavodoxin]. It participates in isoprenoid biosynthesis; isopentenyl diphosphate biosynthesis via DXP pathway; isopentenyl diphosphate from 1-deoxy-D-xylulose 5-phosphate: step 5/6. Functionally, converts 2C-methyl-D-erythritol 2,4-cyclodiphosphate (ME-2,4cPP) into 1-hydroxy-2-methyl-2-(E)-butenyl 4-diphosphate. The chain is 4-hydroxy-3-methylbut-2-en-1-yl diphosphate synthase (flavodoxin) from Caldanaerobacter subterraneus subsp. tengcongensis (strain DSM 15242 / JCM 11007 / NBRC 100824 / MB4) (Thermoanaerobacter tengcongensis).